The sequence spans 155 residues: Endoribonuclease YbeY (155 aa).

Residues His114, His118, and His124 each coordinate Zn(2+).

This sequence belongs to the endoribonuclease YbeY family. Zn(2+) serves as cofactor.

Its subcellular location is the cytoplasm. Single strand-specific metallo-endoribonuclease involved in late-stage 70S ribosome quality control and in maturation of the 3' terminus of the 16S rRNA. The chain is Endoribonuclease YbeY from Shigella flexneri serotype 5b (strain 8401).